We begin with the raw amino-acid sequence, 116 residues long: MQARRQTLPQFIKCKQTKCKIKLATINSAKALFLEMPGKLLHNCNRKLINRTNCPTQIMNPAKNALNGKLSRIKIMNVHWITPNNTKKKQNVSISFSLGYFSIWAKYALLEVLKVS.

This is an uncharacterized protein from Saccharomyces cerevisiae (strain ATCC 204508 / S288c) (Baker's yeast).